A 188-amino-acid chain; its full sequence is MRIGVLSFQGGVIEHIHHIESLKAIPVEIKNKYELNNIDGIILPGGESTTMGKLLMDTDMLEPLREKILKGLPTWGTCAGMILLANSIENSNKSYLKVIDIKVRRNAYGSQIDSFYYETLIPDISSSKIPLVFIRAPFITYLGSNVKSLCSIKGNVVAARYKNILVTSFHPELTDDLSFHKYFLSTCR.

46-48 serves as a coordination point for L-glutamine; sequence GES. Cys-78 serves as the catalytic Nucleophile. Residues Arg-105 and 134–135 contribute to the L-glutamine site; that span reads IR. Residues His-170 and Glu-172 each act as charge relay system in the active site.

This sequence belongs to the glutaminase PdxT/SNO family. As to quaternary structure, in the presence of PdxS, forms a dodecamer of heterodimers. Only shows activity in the heterodimer.

The enzyme catalyses aldehydo-D-ribose 5-phosphate + D-glyceraldehyde 3-phosphate + L-glutamine = pyridoxal 5'-phosphate + L-glutamate + phosphate + 3 H2O + H(+). The catalysed reaction is L-glutamine + H2O = L-glutamate + NH4(+). The protein operates within cofactor biosynthesis; pyridoxal 5'-phosphate biosynthesis. Catalyzes the hydrolysis of glutamine to glutamate and ammonia as part of the biosynthesis of pyridoxal 5'-phosphate. The resulting ammonia molecule is channeled to the active site of PdxS. The sequence is that of Pyridoxal 5'-phosphate synthase subunit PdxT from Clostridium kluyveri (strain ATCC 8527 / DSM 555 / NBRC 12016 / NCIMB 10680 / K1).